The chain runs to 201 residues: Putative manganese efflux pump MntP 2 (201 aa).

6 helical membrane passes run 3-23, 39-59, 65-85, 116-136, 141-161, and 176-196; these read LISV…VSIT, IGLF…SIGI, IAAL…GKMI, LILL…SFAF, IINT…IGVM, and ILGG…HTNI.

Belongs to the MntP (TC 9.B.29) family.

It is found in the cell membrane. Probably functions as a manganese efflux pump. The polypeptide is Putative manganese efflux pump MntP 2 (Clostridium botulinum (strain Hall / ATCC 3502 / NCTC 13319 / Type A)).